The primary structure comprises 628 residues: tRNA uridine 5-carboxymethylaminomethyl modification enzyme MnmG (628 aa).

Residues 14-19 (GAGHAG), valine 126, and serine 181 contribute to the FAD site. Residue 273-287 (GPRYCPSIEDKVVRF) participates in NAD(+) binding. Glutamine 370 is a binding site for FAD.

This sequence belongs to the MnmG family. Homodimer. Heterotetramer of two MnmE and two MnmG subunits. Requires FAD as cofactor.

Its subcellular location is the cytoplasm. Its function is as follows. NAD-binding protein involved in the addition of a carboxymethylaminomethyl (cmnm) group at the wobble position (U34) of certain tRNAs, forming tRNA-cmnm(5)s(2)U34. The protein is tRNA uridine 5-carboxymethylaminomethyl modification enzyme MnmG of Bacillus licheniformis (strain ATCC 14580 / DSM 13 / JCM 2505 / CCUG 7422 / NBRC 12200 / NCIMB 9375 / NCTC 10341 / NRRL NRS-1264 / Gibson 46).